Reading from the N-terminus, the 58-residue chain is Small ribosomal subunit protein bS21 (58 aa).

A compositionally biased stretch (basic and acidic residues) spans 32–42 (VRKREHYEKPS). The disordered stretch occupies residues 32–58 (VRKREHYEKPSVKKKKKSEAARKRKFK). Basic residues predominate over residues 43–58 (VKKKKKSEAARKRKFK).

This sequence belongs to the bacterial ribosomal protein bS21 family.

The sequence is that of Small ribosomal subunit protein bS21 from Clostridium botulinum (strain Okra / Type B1).